A 300-amino-acid chain; its full sequence is Tyrosine recombinase XerC (300 aa).

The 87-residue stretch at V4–V90 folds into the Core-binding (CB) domain. One can recognise a Tyr recombinase domain in the interval H111–D290. Active-site residues include R150, K174, H242, R245, and H268. Y277 functions as the O-(3'-phospho-DNA)-tyrosine intermediate in the catalytic mechanism.

It belongs to the 'phage' integrase family. XerC subfamily. In terms of assembly, forms a cyclic heterotetrameric complex composed of two molecules of XerC and two molecules of XerD, in which XerC interacts with XerD via its C-terminal region, XerD interacts with XerC via its C-terminal region and so on.

Its subcellular location is the cytoplasm. With respect to regulation, ftsK may regulate the catalytic switch between XerC and XerD in the heterotetrameric complex during the two steps of the recombination process. Site-specific tyrosine recombinase, which acts by catalyzing the cutting and rejoining of the recombining DNA molecules. Binds cooperatively to specific DNA consensus sequences that are separated from XerD binding sites by a short central region, forming the heterotetrameric XerC-XerD complex that recombines DNA substrates. The complex is essential to convert dimers of the bacterial chromosome into monomers to permit their segregation at cell division. It also contributes to the segregational stability of plasmids. In the complex XerC specifically exchanges the top DNA strands. This is Tyrosine recombinase XerC from Salmonella typhi.